A 108-amino-acid chain; its full sequence is MRPLKQAIYSSRTADKFVVRLPDGMRERIAEVARNHHRSMNSEIIARLEQSLIQEGALGEELSMRLDSPELSLHERELLQRFRQLSHRQQNALVSLIAHDAEMAADAT.

In terms of biological role, functions both as a transcriptional activator and a repressor of multiple genes encoding virulence factors as well as genes involved in environmental adaptation. Represses genes involved in iron homeostasis. Modulates intracellular levels of c-di-GMP which in turn regulates swimming motility and biofilm formation. This is Transcription factor AmrZ from Pseudomonas ogarae (strain DSM 112162 / CECT 30235 / F113).